A 1251-amino-acid polypeptide reads, in one-letter code: Myosin-1 (1251 aa).

A disordered region spans residues 1-37; it reads MGQSKRPFKNKEEKKSRGFGRSRHDDAGAGGRPQVKK. The span at 9–27 shows a compositional bias: basic and acidic residues; it reads KNKEEKKSRGFGRSRHDDA. In terms of domain architecture, Myosin motor spans 48–727; sequence IGVSDLTLLS…TLFALEHMRD (680 aa). An ATP-binding site is contributed by 141–148; the sequence is GESGAGKT. Phosphoserine is present on Ser369. The actin-binding stretch occupies residues 416-498; the sequence is TIGILDIYGF…PGVFAALNDA (83 aa). IQ domains lie at 731-751 and 752-777; these read HNMATRIQRAWRNYLRYRTEC and AIRIQRFWRRVTGGLEFIKLRDQGHK. One can recognise a TH1 domain in the interval 785–980; the sequence is RRRYSLVGSR…PGEPANSVSK (196 aa). 2 disordered regions span residues 958–1093 and 1135–1227; these read RDDV…SNEL and AKTP…ASIA. The span at 1040-1052 shows a compositional bias: low complexity; the sequence is VAQSVTAVAAAHA. Residues 1061-1073 are compositionally biased toward pro residues; sequence RPPPPPPPTQPPA. In terms of domain architecture, SH3 spans 1074 to 1135; the sequence is PKKDTAKALY…PEAYLEPIVA (62 aa). Over residues 1139–1148 the composition is skewed to pro residues; it reads SLPPPPPSLP. 2 stretches are compositionally biased toward polar residues: residues 1150–1161 and 1216–1225; these read QSKSAVSNTLPN and ATPSSLSNAS.

Belongs to the TRAFAC class myosin-kinesin ATPase superfamily. Myosin family. In terms of processing, phosphorylation of the TEDS site (Ser-369) is required for the polarization of the actin cytoskeleton. Phosphorylation probably activates the myosin-I ATPase activity.

It localises to the cytoplasm. The protein resides in the cytoskeleton. Its subcellular location is the actin patch. Functionally, type-I myosin implicated in the organization of the actin cytoskeleton. Required for proper actin cytoskeleton polarization. At the cell cortex, assembles in patch-like structures together with proteins from the actin-polymerizing machinery and promotes actin assembly. Functions as actin nucleation-promoting factor (NPF) for the Arp2/3 complex. The chain is Myosin-1 (MYO1) from Coccidioides immitis (strain RS) (Valley fever fungus).